Reading from the N-terminus, the 263-residue chain is Syntaxin-73 (263 aa).

At 1–240 (MGVIDLITRV…TVTKLRSSRN (240 aa)) the chain is on the cytoplasmic side. Ser12 is subject to Phosphoserine. The t-SNARE coiled-coil homology domain occupies 169–231 (YEMKRIKQAR…KSTNVRLKDT (63 aa)). A helical; Anchor for type IV membrane protein membrane pass occupies residues 241–261 (FCIDIILLCILLGIAAFIYNS). The Vesicular segment spans residues 262-263 (VK).

It belongs to the syntaxin family. In terms of assembly, part of the t-SNARE complex. In terms of tissue distribution, expressed in root, leaf, stem, flower and silique.

Its subcellular location is the membrane. Functionally, vesicle trafficking protein that functions in the secretory pathway. This is Syntaxin-73 (SYP73) from Arabidopsis thaliana (Mouse-ear cress).